A 100-amino-acid chain; its full sequence is Urease subunit gamma (100 aa).

The protein belongs to the urease gamma subunit family. In terms of assembly, heterotrimer of UreA (gamma), UreB (beta) and UreC (alpha) subunits. Three heterotrimers associate to form the active enzyme.

The protein localises to the cytoplasm. The enzyme catalyses urea + 2 H2O + H(+) = hydrogencarbonate + 2 NH4(+). It functions in the pathway nitrogen metabolism; urea degradation; CO(2) and NH(3) from urea (urease route): step 1/1. The chain is Urease subunit gamma from Synechococcus sp. (strain RCC307).